Reading from the N-terminus, the 269-residue chain is Indole-3-glycerol phosphate synthase (269 aa).

Belongs to the TrpC family.

It carries out the reaction 1-(2-carboxyphenylamino)-1-deoxy-D-ribulose 5-phosphate + H(+) = (1S,2R)-1-C-(indol-3-yl)glycerol 3-phosphate + CO2 + H2O. It functions in the pathway amino-acid biosynthesis; L-tryptophan biosynthesis; L-tryptophan from chorismate: step 4/5. The chain is Indole-3-glycerol phosphate synthase from Roseiflexus sp. (strain RS-1).